A 287-amino-acid polypeptide reads, in one-letter code: Ribosomal RNA small subunit methyltransferase A (287 aa).

Polar residues predominate over residues 1–15; that stretch reads MSKTTFDAQSITNSL. The segment at 1–20 is disordered; it reads MSKTTFDAQSITNSLRAAKH. Residues N29, L31, G56, E77, and N126 each coordinate S-adenosyl-L-methionine.

Belongs to the class I-like SAM-binding methyltransferase superfamily. rRNA adenine N(6)-methyltransferase family. RsmA subfamily.

The protein resides in the cytoplasm. It carries out the reaction adenosine(1518)/adenosine(1519) in 16S rRNA + 4 S-adenosyl-L-methionine = N(6)-dimethyladenosine(1518)/N(6)-dimethyladenosine(1519) in 16S rRNA + 4 S-adenosyl-L-homocysteine + 4 H(+). Specifically dimethylates two adjacent adenosines (A1518 and A1519) in the loop of a conserved hairpin near the 3'-end of 16S rRNA in the 30S particle. May play a critical role in biogenesis of 30S subunits. In Psychrobacter cryohalolentis (strain ATCC BAA-1226 / DSM 17306 / VKM B-2378 / K5), this protein is Ribosomal RNA small subunit methyltransferase A.